The following is a 187-amino-acid chain: Resolvase OPG149 (187 aa).

It belongs to the RuvC family. Poxviruses-type subfamily. It depends on Mg(2+) as a cofactor.

Its function is as follows. Plays a role in DNA replication by cleaving viral DNA concatamers to yield unit-length viral genomes. The concatamer junctions contain inverted repeat sequences that can be extruded as cruciforms, yielding Holliday junctions that A22 protein cleaves. The sequence is that of Resolvase OPG149 (OPG149) from Vaccinia virus (strain Western Reserve) (VACV).